A 288-amino-acid chain; its full sequence is MRIIVPATSANIGPGFDSIGVALSKYLSIEVLEESTEWLVEHNLVNIPKDHTNLLIQTALHVKSDLAPHRLKMFSDIPLARGLGSSSSVIVAGIELANQLGNLALSQKEKLEIATRLEGHPDNVAPAIFGDLVISSIVKNDIKSLEVMFPDSSFIAFIPNYELKTSDSRNVLPQKLSYEDAVASSSVANVMVASLLKGDLVTAGWAIERDLFHERYRQPLVKEFGVIKQISTQNGAYATYLSGAGPTVMVLCSKEKEQPIVTELSKLCLDGQIQVLNIERKGVRVEKR.

78-88 lines the ATP pocket; sequence PLARGLGSSSS.

Belongs to the GHMP kinase family. Homoserine kinase subfamily.

It is found in the cytoplasm. It carries out the reaction L-homoserine + ATP = O-phospho-L-homoserine + ADP + H(+). The protein operates within amino-acid biosynthesis; L-threonine biosynthesis; L-threonine from L-aspartate: step 4/5. Functionally, catalyzes the ATP-dependent phosphorylation of L-homoserine to L-homoserine phosphate. This Streptococcus agalactiae serotype III (strain NEM316) protein is Homoserine kinase.